Reading from the N-terminus, the 252-residue chain is Enolase-phosphatase E1 (252 aa).

Mg(2+) is bound by residues aspartate 14 and glutamate 16. Substrate contacts are provided by residues 142 to 143 and lysine 176; that span reads SS. Residue aspartate 201 coordinates Mg(2+).

The protein belongs to the HAD-like hydrolase superfamily. MasA/MtnC family. Monomer. Requires Mg(2+) as cofactor.

The protein resides in the cytoplasm. It localises to the nucleus. It carries out the reaction 5-methylsulfanyl-2,3-dioxopentyl phosphate + H2O = 1,2-dihydroxy-5-(methylsulfanyl)pent-1-en-3-one + phosphate. It participates in amino-acid biosynthesis; L-methionine biosynthesis via salvage pathway; L-methionine from S-methyl-5-thio-alpha-D-ribose 1-phosphate: step 3/6. The protein operates within amino-acid biosynthesis; L-methionine biosynthesis via salvage pathway; L-methionine from S-methyl-5-thio-alpha-D-ribose 1-phosphate: step 4/6. In terms of biological role, bifunctional enzyme that catalyzes the enolization of 2,3-diketo-5-methylthiopentyl-1-phosphate (DK-MTP-1-P) into the intermediate 2-hydroxy-3-keto-5-methylthiopentenyl-1-phosphate (HK-MTPenyl-1-P), which is then dephosphorylated to form the acireductone 1,2-dihydroxy-3-keto-5-methylthiopentene (DHK-MTPene). The chain is Enolase-phosphatase E1 from Drosophila ananassae (Fruit fly).